Reading from the N-terminus, the 619-residue chain is MKTNSSFHAAGEVATQPAWGTGEQAAQPLNGSTSRFAMSESSLADLLQKAASQYPNRAAYKFIDYDTDPAGFTETVTWWQVHRRAMIVAEELWIYASSGDRVAILAPQGLEYIIAFMGVLQAGLIAVPLPVPQFGIHDERISSALRDSAPSIILTTSSVIDEVTTYAPHACAAQGQSAPIVVAVDALDLSSSRALDPTRFERPSTAYLQYTSGSTRAPAGVVLSHKNVITNCVQLMSDYIGDSEKVPSTPVSWLPFYHDMGLMLGIILPMINQDTAVLMSPMAFLQRPARWMQLLAKHRAQISSAPNFGFELAVRRTSDDDMAGLDLGHVRTIVTGAERVNVATLRRFTERFAPFNLSETAIRPSYGLAEATVYVATAGPGRAPKSVCFDYQQLSVGQAKRAENGSEGANLVSYGAPRASTVRIVDPETRMENPAGTVGEIWVQGDNVGLGYWRNPQQTEATFRARLVTPSPGTSEGPWLRTGDLGVIFEGELFITGRIKELLVVDGANHYPEDIEATIQEITGGRVVAIAVPDDRTEKLVTIIELMKRGRTDEEEKNRLRTVKREVASAISRSHRLRVADVVMVAPGSIPVTTSGKVRRSASVERYLHHEFSRLDAMA.

Belongs to the ATP-dependent AMP-binding enzyme family.

It carries out the reaction 17-(4-hydroxyphenyl)heptadecanoate + holo-[(phenol)carboxyphthiodiolenone synthase] + ATP = 17-(4-hydroxyphenyl)heptadecanoyl-[(phenol)carboxyphthiodiolenone synthase] + AMP + diphosphate. It catalyses the reaction 19-(4-hydroxyphenyl)nonadecanoate + holo-[(phenol)carboxyphthiodiolenone synthase] + ATP = 19-(4-hydroxyphenyl)nonadecanoyl-[(phenol)carboxyphthiodiolenone synthase] + AMP + diphosphate. The catalysed reaction is dodecanoate + ATP + H(+) = dodecanoyl-AMP + diphosphate. It participates in lipid metabolism; fatty acid biosynthesis. In terms of biological role, catalyzes the activation of long-chain fatty acids as acyl-adenylates (acyl-AMP), which are then transferred to the multifunctional polyketide synthase PpsA for further chain extension. Involved in the biosynthesis of phenolphthiocerol, which is an important intermediate in the biosynthesis of phenolic glycolipid (PGL), also called mycosid B. In Mycobacterium tuberculosis (strain ATCC 25618 / H37Rv), this protein is 4-hydroxyphenylalkanoate adenylyltransferase (fadD29).